A 1252-amino-acid polypeptide reads, in one-letter code: Myosin-1 (1252 aa).

Positions 1-27 are disordered; the sequence is MAPSKKAGKKVTPASKKSAGQGKVAKA. A Myosin motor domain is found at 38 to 712; it reads VGVSDMTLLT…TLFALETMRD (675 aa). 128–135 serves as a coordination point for ATP; it reads GESGAGKT. Residue Ser-356 is modified to Phosphoserine. Residues 403–485 form an actin-binding region; sequence IIGILDIFGF…PGIFAALNDA (83 aa). IQ domains lie at 716–736 and 737–762; these read HNMA…KHEC and ARRI…YGHQ. In terms of domain architecture, TH1 spans 770–953; sequence RRRFSLLSYR…TVHVASGEPP (184 aa). Disordered regions lie at residues 945–1049 and 1103–1228; these read VHVA…PETP and PPKA…PATA. Composition is skewed to pro residues over residues 989–999 and 1028–1046; these read RSVPKPKPVAQ and RPPP…PAKP. Residues 1046-1104 form the SH3 domain; it reads PETPMYRAKFAFEGQEGEMSLKKDDVVELVEKDDNGWWLVKMDGVEGWAPNNYLELVPP. A compositionally biased stretch (polar residues) spans 1162–1175; it reads ADTTPASSRPSSAI. The span at 1178-1193 shows a compositional bias: pro residues; it reads KPPPPVAAKPKPPVIP. The segment covering 1194-1203 has biased composition (low complexity); the sequence is VKPSVSAKGP. Residues 1204 to 1215 are compositionally biased toward pro residues; it reads AKPPIPTAPRPP. Residues 1216-1228 are compositionally biased toward low complexity; the sequence is AASTSRSSKPATA.

This sequence belongs to the TRAFAC class myosin-kinesin ATPase superfamily. Myosin family. Phosphorylation of the TEDS site (Ser-356) is required for the polarization of the actin cytoskeleton. Phosphorylation probably activates the myosin-I ATPase activity.

The protein resides in the cytoplasm. Its subcellular location is the cytoskeleton. It is found in the actin patch. Functionally, type-I myosin implicated in the organization of the actin cytoskeleton. Required for proper actin cytoskeleton polarization. At the cell cortex, assembles in patch-like structures together with proteins from the actin-polymerizing machinery and promotes actin assembly. Functions as actin nucleation-promoting factor (NPF) for the Arp2/3 complex. This chain is Myosin-1 (MYO1), found in Laccaria bicolor (strain S238N-H82 / ATCC MYA-4686) (Bicoloured deceiver).